Consider the following 319-residue polypeptide: Plastid lipid-associated protein 2, chloroplastic (319 aa).

Residues 1-59 constitute a chloroplast transit peptide; the sequence is MATVQFFNQFPCKTRVQSSANSKPLSKPPSSLVPMSALTRRPSFPPGEFAVSRSDFRVR. The interval 17-39 is disordered; sequence QSSANSKPLSKPPSSLVPMSALT. The span at 18–36 shows a compositional bias: low complexity; sequence SSANSKPLSKPPSSLVPMS.

The protein belongs to the PAP/fibrillin family. Expressed almost exclusively in petals. Very weak expression in all other organs.

The protein localises to the plastid. It is found in the chloroplast. May stabilize the accumulated carotenoid structures. The protein is Plastid lipid-associated protein 2, chloroplastic (PAP2) of Brassica campestris (Field mustard).